The sequence spans 308 residues: Acetyl-coenzyme A carboxylase carboxyl transferase subunit beta (308 aa).

Positions 25–294 (VWTKCTSCEQ…PLVVSVNDAP (270 aa)) constitute a CoA carboxyltransferase N-terminal domain. 4 residues coordinate Zn(2+): Cys-29, Cys-32, Cys-48, and Cys-51. The C4-type zinc-finger motif lies at 29-51 (CTSCEQVLYYAELERNLEVCPKC).

It belongs to the AccD/PCCB family. In terms of assembly, acetyl-CoA carboxylase is a heterohexamer composed of biotin carboxyl carrier protein (AccB), biotin carboxylase (AccC) and two subunits each of ACCase subunit alpha (AccA) and ACCase subunit beta (AccD). The cofactor is Zn(2+).

The protein localises to the cytoplasm. The catalysed reaction is N(6)-carboxybiotinyl-L-lysyl-[protein] + acetyl-CoA = N(6)-biotinyl-L-lysyl-[protein] + malonyl-CoA. The protein operates within lipid metabolism; malonyl-CoA biosynthesis; malonyl-CoA from acetyl-CoA: step 1/1. In terms of biological role, component of the acetyl coenzyme A carboxylase (ACC) complex. Biotin carboxylase (BC) catalyzes the carboxylation of biotin on its carrier protein (BCCP) and then the CO(2) group is transferred by the transcarboxylase to acetyl-CoA to form malonyl-CoA. This chain is Acetyl-coenzyme A carboxylase carboxyl transferase subunit beta, found in Vibrio cholerae serotype O1 (strain ATCC 39315 / El Tor Inaba N16961).